Here is a 251-residue protein sequence, read N- to C-terminus: Triosephosphate isomerase (251 aa).

9-11 contacts substrate; the sequence is NWK. Catalysis depends on H96, which acts as the Electrophile. E166 acts as the Proton acceptor in catalysis. Residues G172, S212, and 233-234 contribute to the substrate site; that span reads GG.

This sequence belongs to the triosephosphate isomerase family. Homodimer.

It localises to the cytoplasm. It carries out the reaction D-glyceraldehyde 3-phosphate = dihydroxyacetone phosphate. Its pathway is carbohydrate biosynthesis; gluconeogenesis. The protein operates within carbohydrate degradation; glycolysis; D-glyceraldehyde 3-phosphate from glycerone phosphate: step 1/1. Functionally, involved in the gluconeogenesis. Catalyzes stereospecifically the conversion of dihydroxyacetone phosphate (DHAP) to D-glyceraldehyde-3-phosphate (G3P). The chain is Triosephosphate isomerase from Pelodictyon phaeoclathratiforme (strain DSM 5477 / BU-1).